The following is a 237-amino-acid chain: UPF0173 metal-dependent hydrolase BCAN_B0597 (237 aa).

It belongs to the UPF0173 family.

The polypeptide is UPF0173 metal-dependent hydrolase BCAN_B0597 (Brucella canis (strain ATCC 23365 / NCTC 10854 / RM-666)).